A 402-amino-acid polypeptide reads, in one-letter code: Galactoside 2-alpha-L-fucosyltransferase (402 aa).

At 1–6 (MRYNSN) the chain is on the cytoplasmic side. Residues 7 to 27 (YLMYFCLVLGIFANIYVIIKI) form a helical; Signal-anchor for type II membrane protein membrane-spanning segment. Residues 28–402 (TLGSSHILEY…TDLNGKISKY (375 aa)) are Lumenal-facing. Residues N119, N175, and N301 are each glycosylated (N-linked (GlcNAc...) asparagine).

It belongs to the glycosyltransferase 11 family. As to quaternary structure, may form oligomers. In terms of processing, N-glycosylated. Expression is restricted to pharyngeal neurons and gland cells.

It is found in the golgi apparatus. It localises to the golgi stack membrane. The protein operates within protein modification; protein glycosylation. In terms of biological role, selectively catalyzes the addition of fucose in alpha 1-2 linkage to Gal-beta-(1-&gt;3)-GalNAc-alpha-R, Gal-beta-(1-&gt;3)-(GlcNAc-beta-(1-&gt;6))-GalNAc-alpha-R and Gal-beta-(1-&gt;3)-GalNAc acceptors but not Gal-beta-(1-&gt;3)-GlcNAc-beta-(1-&gt;3)-Gal-beta-(1-&gt;4)-Glc in vitro. In Caenorhabditis elegans, this protein is Galactoside 2-alpha-L-fucosyltransferase.